Reading from the N-terminus, the 219-residue chain is Ribose-5-phosphate isomerase A (219 aa).

Residues 28–31, 81–84, and 94–97 contribute to the substrate site; these read TGST, DGAD, and KGGG. Glu103 acts as the Proton acceptor in catalysis. Residue Lys121 coordinates substrate.

It belongs to the ribose 5-phosphate isomerase family. In terms of assembly, homodimer.

It carries out the reaction aldehydo-D-ribose 5-phosphate = D-ribulose 5-phosphate. It functions in the pathway carbohydrate degradation; pentose phosphate pathway; D-ribose 5-phosphate from D-ribulose 5-phosphate (non-oxidative stage): step 1/1. Functionally, catalyzes the reversible conversion of ribose-5-phosphate to ribulose 5-phosphate. This is Ribose-5-phosphate isomerase A from Photorhabdus laumondii subsp. laumondii (strain DSM 15139 / CIP 105565 / TT01) (Photorhabdus luminescens subsp. laumondii).